Here is a 277-residue protein sequence, read N- to C-terminus: Phosphoribosylaminoimidazole-succinocarboxamide synthase (277 aa).

This sequence belongs to the SAICAR synthetase family.

It catalyses the reaction 5-amino-1-(5-phospho-D-ribosyl)imidazole-4-carboxylate + L-aspartate + ATP = (2S)-2-[5-amino-1-(5-phospho-beta-D-ribosyl)imidazole-4-carboxamido]succinate + ADP + phosphate + 2 H(+). Its pathway is purine metabolism; IMP biosynthesis via de novo pathway; 5-amino-1-(5-phospho-D-ribosyl)imidazole-4-carboxamide from 5-amino-1-(5-phospho-D-ribosyl)imidazole-4-carboxylate: step 1/2. The sequence is that of Phosphoribosylaminoimidazole-succinocarboxamide synthase from Salinispora arenicola (strain CNS-205).